We begin with the raw amino-acid sequence, 304 residues long: Acetylglutamate kinase (304 aa).

Residues 77-78, R99, and N193 contribute to the substrate site; that span reads GG.

It belongs to the acetylglutamate kinase family. ArgB subfamily.

Its subcellular location is the cytoplasm. The catalysed reaction is N-acetyl-L-glutamate + ATP = N-acetyl-L-glutamyl 5-phosphate + ADP. It functions in the pathway amino-acid biosynthesis; L-arginine biosynthesis; N(2)-acetyl-L-ornithine from L-glutamate: step 2/4. Functionally, catalyzes the ATP-dependent phosphorylation of N-acetyl-L-glutamate. This chain is Acetylglutamate kinase, found in Pelodictyon phaeoclathratiforme (strain DSM 5477 / BU-1).